Here is a 365-residue protein sequence, read N- to C-terminus: Succinyl-diaminopimelate desuccinylase (365 aa).

Histidine 65 contributes to the Zn(2+) binding site. Aspartate 67 is a catalytic residue. Aspartate 96 is a Zn(2+) binding site. Glutamate 126 acts as the Proton acceptor in catalysis. Zn(2+) is bound by residues glutamate 127, glutamate 155, and histidine 340.

The protein belongs to the peptidase M20A family. DapE subfamily. In terms of assembly, homodimer. It depends on Zn(2+) as a cofactor. Co(2+) serves as cofactor.

It carries out the reaction N-succinyl-(2S,6S)-2,6-diaminopimelate + H2O = (2S,6S)-2,6-diaminopimelate + succinate. Its pathway is amino-acid biosynthesis; L-lysine biosynthesis via DAP pathway; LL-2,6-diaminopimelate from (S)-tetrahydrodipicolinate (succinylase route): step 3/3. Catalyzes the hydrolysis of N-succinyl-L,L-diaminopimelic acid (SDAP), forming succinate and LL-2,6-diaminopimelate (DAP), an intermediate involved in the bacterial biosynthesis of lysine and meso-diaminopimelic acid, an essential component of bacterial cell walls. The sequence is that of Succinyl-diaminopimelate desuccinylase from Campylobacter jejuni subsp. jejuni serotype O:2 (strain ATCC 700819 / NCTC 11168).